The primary structure comprises 160 residues: Phosphopantetheine adenylyltransferase (160 aa).

A substrate-binding site is contributed by Ser-10. ATP contacts are provided by residues 10-11 (SF) and His-18. Substrate is bound by residues Lys-42, Thr-74, and Arg-88. ATP is bound by residues 89–91 (GLR), Glu-99, and 124–130 (YSFISST).

This sequence belongs to the bacterial CoaD family. In terms of assembly, homohexamer. Mg(2+) serves as cofactor.

Its subcellular location is the cytoplasm. It carries out the reaction (R)-4'-phosphopantetheine + ATP + H(+) = 3'-dephospho-CoA + diphosphate. Its pathway is cofactor biosynthesis; coenzyme A biosynthesis; CoA from (R)-pantothenate: step 4/5. Reversibly transfers an adenylyl group from ATP to 4'-phosphopantetheine, yielding dephospho-CoA (dPCoA) and pyrophosphate. This Leptospira borgpetersenii serovar Hardjo-bovis (strain L550) protein is Phosphopantetheine adenylyltransferase.